A 327-amino-acid polypeptide reads, in one-letter code: Tetraacyldisaccharide 4'-kinase (327 aa).

An ATP-binding site is contributed by 54–61; sequence TTGGTGKT. The disordered stretch occupies residues 78–106; that stretch reads PHILSRGHGGRERGPIGVNPNRSTPRDVG.

This sequence belongs to the LpxK family.

The catalysed reaction is a lipid A disaccharide + ATP = a lipid IVA + ADP + H(+). It functions in the pathway glycolipid biosynthesis; lipid IV(A) biosynthesis; lipid IV(A) from (3R)-3-hydroxytetradecanoyl-[acyl-carrier-protein] and UDP-N-acetyl-alpha-D-glucosamine: step 6/6. Transfers the gamma-phosphate of ATP to the 4'-position of a tetraacyldisaccharide 1-phosphate intermediate (termed DS-1-P) to form tetraacyldisaccharide 1,4'-bis-phosphate (lipid IVA). In Gluconobacter oxydans (strain 621H) (Gluconobacter suboxydans), this protein is Tetraacyldisaccharide 4'-kinase.